We begin with the raw amino-acid sequence, 275 residues long: MQDTTANQVAANATSSFTEHLQRNRPGLLPYNQPFPAALTGAGSQPLQVPHATTIVSLTYGGGVLMAGDRRATMGNVIASRHIEKVFPADSYSVLGIAGTAGIAIDLTRLFQVELEHYEKIEGTLLSLEGKANRLGAMIRGNLPMAMQGLAVVPLFAGFDLPVGIGRLFSYDVTGGRYEEKEHHAVGSGSVFARGALKKLWRPGLTAEEAVAVAVESLYDAADDDSATGGPDPVRQLWPVVYTVERSGARRIPDHDLASVAGAIIEARTTARREA.

A propeptide spans 1 to 52 (MQDTTANQVAANATSSFTEHLQRNRPGLLPYNQPFPAALTGAGSQPLQVPHA) (removed in mature form; by autocatalysis). Residue Thr53 is the Nucleophile of the active site.

Belongs to the peptidase T1B family. As to quaternary structure, the 20S proteasome core is composed of 14 alpha and 14 beta subunits that assemble into four stacked heptameric rings, resulting in a barrel-shaped structure. The two inner rings, each composed of seven catalytic beta subunits, are sandwiched by two outer rings, each composed of seven alpha subunits. The catalytic chamber with the active sites is on the inside of the barrel. Has a gated structure, the ends of the cylinder being occluded by the N-termini of the alpha-subunits. Is capped by the proteasome-associated ATPase, ARC.

It is found in the cytoplasm. It catalyses the reaction Cleavage of peptide bonds with very broad specificity.. The protein operates within protein degradation; proteasomal Pup-dependent pathway. With respect to regulation, the formation of the proteasomal ATPase ARC-20S proteasome complex, likely via the docking of the C-termini of ARC into the intersubunit pockets in the alpha-rings, may trigger opening of the gate for substrate entry. Interconversion between the open-gate and close-gate conformations leads to a dynamic regulation of the 20S proteasome proteolysis activity. Its function is as follows. Component of the proteasome core, a large protease complex with broad specificity involved in protein degradation. This Arthrobacter sp. (strain FB24) protein is Proteasome subunit beta.